Consider the following 308-residue polypeptide: MAESLMDIKRKIASTKKTGQITQAMQMVSGAKLSQIEKRAKKYQIYSDKVRQIVTHLAAGQLLELANAAESDTDSGDKSQVISVASLLQKRPVKKTGYLVITSDRGLVGSYNSTVLKAMMQMIKDDHESPDDYVMMAIGGVGADFFKARGLNLAYEYRGVSDIPTFNEVREIVKTAVTMFDNGVFDELYVCYNHHVNTLTSAFRAEKMLPISDLDVSEVADTNVEYLIEPDLDSVLESVLPQYAESLIFGAIMDAKTAEHAASTTAMRSATDNANDLISHLSTQYNRARQAAITTEITEIVGGAAALE.

Belongs to the ATPase gamma chain family. As to quaternary structure, F-type ATPases have 2 components, CF(1) - the catalytic core - and CF(0) - the membrane proton channel. CF(1) has five subunits: alpha(3), beta(3), gamma(1), delta(1), epsilon(1). CF(0) has three main subunits: a, b and c.

It localises to the cell membrane. Functionally, produces ATP from ADP in the presence of a proton gradient across the membrane. The gamma chain is believed to be important in regulating ATPase activity and the flow of protons through the CF(0) complex. In Lacticaseibacillus casei (strain BL23) (Lactobacillus casei), this protein is ATP synthase gamma chain.